Here is a 124-residue protein sequence, read N- to C-terminus: Small ribosomal subunit protein uS12c (124 aa).

Positions 105–124 are disordered; it reads AGVKDRRQSRSKYGAKRPKA. Basic residues predominate over residues 113 to 124; it reads SRSKYGAKRPKA.

The protein belongs to the universal ribosomal protein uS12 family. In terms of assembly, part of the 30S ribosomal subunit.

Its subcellular location is the plastid. It localises to the cyanelle. With S4 and S5 plays an important role in translational accuracy. Located at the interface of the 30S and 50S subunits. The sequence is that of Small ribosomal subunit protein uS12c (rps12) from Cyanophora paradoxa.